A 587-amino-acid chain; its full sequence is Ankyrin repeat and SOCS box protein 14 (587 aa).

ANK repeat units lie at residues 81–110, 116–145, 149–178, 182–211, 215–244, 248–277, 281–310, 313–342, 355–384, 385–414, and 416–449; these read NGWL…PSTW, NGET…NPNA, EGNS…DVNL, NERT…YPDA, YGFT…DVHS, DSSS…DANI, SGHL…IAAI, SGIS…DVNF, QRKS…LPNQ, DPVN…NVNY, and CRVN…DTER. One can recognise an SOCS box domain in the interval 521-576; it reads WPEIHFILANPRSLQHLCRLKIRKCMGRLRLRCPVFMSFLPLPNLLKAYVLYKEYD.

Belongs to the ankyrin SOCS box (ASB) family. Interacts with MAPRE2; this interaction promotes MAPRE2 degradation.

It participates in protein modification; protein ubiquitination. Functionally, may be a substrate-recognition component of a SCF-like ECS (Elongin-Cullin-SOCS-box protein) E3 ubiquitin-protein ligase complex which mediates the ubiquitination and subsequent proteasomal degradation of target proteins. Plays a role in the inhibition of cardiomyocyte nuclear proliferation by mediating the ubiquitination and degradation of MAPRE2. In Mus musculus (Mouse), this protein is Ankyrin repeat and SOCS box protein 14 (Asb14).